The primary structure comprises 469 residues: Probable glucuronoxylan glucuronosyltransferase F8H (469 aa).

The Cytoplasmic segment spans residues 1-36; that stretch reads MSLDIKKPNITKTKKKKTGFVVKMQLNNNRGGNKRN. Residues 37 to 57 form a helical; Signal-anchor for type II membrane protein membrane-spanning segment; the sequence is IFIFFFFRNYYTWILWFCLSL. Topologically, residues 58 to 469 are lumenal; sequence YFFTSYFSVE…RVLSQREVDM (412 aa). N-linked (GlcNAc...) asparagine glycosylation is found at Asn-171, Asn-203, Asn-301, and Asn-411.

Belongs to the glycosyltransferase 47 family. As to expression, expressed in xylem cells in stems and in roots.

It localises to the golgi apparatus membrane. Involved in the synthesis of the hemicellulose glucuronoxylan, a major component of secondary cell walls. Probably involved in the synthesis of the glycosyl sequence at the glucuronoxylan reducing end. This chain is Probable glucuronoxylan glucuronosyltransferase F8H (F8H), found in Arabidopsis thaliana (Mouse-ear cress).